The following is a 582-amino-acid chain: MSINTDETTWQTFKRLWQFIRLYKSGLIVAVIALVINAISDTYMISLLKPLLDEGFGNADSDFLRTLPLIIFVMMFIRGTSGFVSTYCLSWVSGNVVMLVRRMVFNHFMHMPVSYFDKEKTGNLLSRITYDSEQVSAATSQALVSIVREGASIIGLLVLMFYNSWQLSLVLFAVAPVVAWGIGVVSKRFRKISKNMQTMMGNVTASAEQMLKGHKVVLSYGGQDIERQRFDKVSNQMRQQSMKLVTAQAAANPIIQMIASFAIVAVLYLASIDSIKEQLTPGTFTVVFSAMFGLMRPLKALTNVTSQFQRGMAASQTLFALIDLEPEKNEGKYTVERAKGDVSVKDVSFTYVGSEKPALEHVSFDIPRGKTVALVGRSGSGKSTIANLFNRFYDVDSGSITLDGRDIRDYELKNLREQFALVSQNVHLFNDTIANNIAYATEDKYERSDIEHAAKLAHAMEFINKMENGLDTMIGENGASLSGGQRQRVAIARALLRDAPVLILDEATSALDTESERAIQAALDELQKDKTVLVIAHRLSTIEKADEILVVDDGAIIERGNHADLIAKNGAYAQLHRIQFGE.

5 helical membrane passes run 27–47 (LIVA…MISL), 69–89 (LIIF…TYCL), 142–162 (ALVS…LMFY), 165–185 (WQLS…IGVV), and 249–269 (AAAN…VLYL). In terms of domain architecture, ABC transmembrane type-1 spans 28-310 (IVAVIALVIN…LTNVTSQFQR (283 aa)). An ABC transporter domain is found at 342 to 578 (VSVKDVSFTY…NGAYAQLHRI (237 aa)). Residue 376–383 (GRSGSGKS) participates in ATP binding.

This sequence belongs to the ABC transporter superfamily. Lipid exporter (TC 3.A.1.106) family. As to quaternary structure, homodimer.

It is found in the cell inner membrane. The catalysed reaction is ATP + H2O + lipid A-core oligosaccharideSide 1 = ADP + phosphate + lipid A-core oligosaccharideSide 2.. Functionally, involved in lipopolysaccharide (LPS) biosynthesis. Translocates lipid A-core from the inner to the outer leaflet of the inner membrane. Transmembrane domains (TMD) form a pore in the inner membrane and the ATP-binding domain (NBD) is responsible for energy generation. The protein is ATP-dependent lipid A-core flippase of Vibrio parahaemolyticus serotype O3:K6 (strain RIMD 2210633).